Reading from the N-terminus, the 203-residue chain is Dephospho-CoA kinase (203 aa).

Positions 6–203 (RLGITGGIAC…SLLGRGGKGG (198 aa)) constitute a DPCK domain. Residue 14–19 (ACGKSV) coordinates ATP.

Belongs to the CoaE family.

It localises to the cytoplasm. The enzyme catalyses 3'-dephospho-CoA + ATP = ADP + CoA + H(+). It participates in cofactor biosynthesis; coenzyme A biosynthesis; CoA from (R)-pantothenate: step 5/5. Its function is as follows. Catalyzes the phosphorylation of the 3'-hydroxyl group of dephosphocoenzyme A to form coenzyme A. The chain is Dephospho-CoA kinase from Thermosynechococcus vestitus (strain NIES-2133 / IAM M-273 / BP-1).